Consider the following 147-residue polypeptide: Hemoglobin subunit gamma (147 aa).

The 145-residue stretch at 3 to 147 (HFTAEEKAII…VAIALGHKYH (145 aa)) folds into the Globin domain. 2 residues coordinate heme b: H64 and H93.

Belongs to the globin family. In terms of assembly, heterotetramer of two alpha chains and two gamma chains in fetal hemoglobin (Hb F). In terms of tissue distribution, red blood cells.

Its function is as follows. Gamma chains make up the fetal hemoglobin F, in combination with alpha chains. The sequence is that of Hemoglobin subunit gamma (HBG) from Cephalopachus bancanus (Western tarsier).